The chain runs to 711 residues: Progesterone receptor (711 aa).

Positions 1-347 are modulating, Pro-Rich; that stretch reads MEDKSKQCLQ…YGFDALPRKI (347 aa). 2 NR C4-type zinc fingers span residues 348-368 and 384-408; these read CLIC…CGSC and CAGR…LKKC. Positions 348-420 form a DNA-binding region, nuclear receptor; the sequence is CLICSDEASG…AGMVLGGRKF (73 aa). In terms of domain architecture, NR LBD spans 457 to 691; the sequence is QEVQYFPELL…EFPEMMTEVI (235 aa).

Belongs to the nuclear hormone receptor family. NR3 subfamily. Expressed in all tissues examined: highly expressed in testis and brain. Also expressed in heart, lung, liver, kidney, stomach and small intestine.

It localises to the nucleus. Functionally, the steroid hormones and their receptors are involved in the regulation of eukaryotic gene expression and affect cellular proliferation and differentiation in target tissues. In Rana dybowskii (Dybovsky's frog), this protein is Progesterone receptor (pgr).